We begin with the raw amino-acid sequence, 1582 residues long: SET-binding protein (1582 aa).

Disordered regions lie at residues 1 to 76, 124 to 246, 278 to 416, and 446 to 513; these read MEPR…WVAG, ITIK…KVPA, LLGS…KRQS, and SNSE…KLSE. Residues 18–27 are compositionally biased toward polar residues; it reads EFLQGSSSRS. The span at 57–74 shows a compositional bias: basic and acidic residues; that stretch reads GSGRDVDCNSNADSEKWV. 2 stretches are compositionally biased toward polar residues: residues 126–141 and 213–229; these read IKQSGDQKVSRTGKNS and MEWSSNSDSGPATQNCF. The span at 278 to 298 shows a compositional bias: low complexity; that stretch reads LLGSVVPSPSSHNSPATPSSS. A compositionally biased stretch (basic and acidic residues) spans 356–365; the sequence is ETTEGKREAY. Polar residues predominate over residues 368 to 388; the sequence is DSAQEASPARQSISSVSNPEN. Basic and acidic residues predominate over residues 450-465; it reads GSKKDPRVPKLGKMIE. Positions 575-587 form a DNA-binding region, a.T hook 1; it reads KKKRGRPKKQPLL. 2 disordered regions span residues 595–617 and 709–787; these read GTSTSPVSPISREFPGTKKRKRR and RGTI…ASTE. Residues 770 to 787 show a composition bias toward polar residues; the sequence is LSTQLGGSNGNLSPASTE. Position 808 is an N6-acetyllysine (Lys-808). Polar residues predominate over residues 845–871; sequence SPVSESHSEETIPSDSGIGTDNNSTSD. Residues 845 to 880 form a disordered region; the sequence is SPVSESHSEETIPSDSGIGTDNNSTSDQAEKSSESR. Residues 1007–1019 constitute a DNA-binding region (a.T hook 2); that stretch reads KKKRGRPAKTNDT. Disordered stretches follow at residues 1128–1155, 1182–1215, 1236–1265, 1429–1461, 1470–1489, and 1507–1582; these read VGGATLSSSRLHKRKHKHKRKHKEDRIL, SGSDKELPLVSEKSKHKERQKHQHGEASHKVSKN, AKDKGDLSSEPVESCAKRYSGSGGDSTRSE, QRQSKTGNNFVKKRRGRPRKQPSQFDEDSRDQM, LPSKRGQKPSLSPLALEPAS, and EAPP…DVLP. Residues 1137–1150 show a composition bias toward basic residues; it reads RLHKRKHKHKRKHK. Basic and acidic residues predominate over residues 1182–1196; sequence SGSDKELPLVSEKSK. A compositionally biased stretch (basic residues) spans 1439 to 1448; that stretch reads VKKRRGRPRK. A DNA-binding region (a.T hook 3) is located at residues 1440–1452; that stretch reads KKRRGRPRKQPSQ. Pro residues-rich tracts occupy residues 1509 to 1533 and 1546 to 1559; these read PPLPPPPPPPLPPPPPPPPPPPPLP and QPPAQPAQPTPQPL.

As to quaternary structure, interacts with SET.

Its subcellular location is the nucleus. The chain is SET-binding protein (Setbp1) from Mus musculus (Mouse).